Reading from the N-terminus, the 206-residue chain is Protein Nef (206 aa).

The N-myristoyl glycine; by host moiety is linked to residue glycine 2. The residue at position 6 (serine 6) is a Phosphoserine; by host. The acidic; interacts with host PACS1 and PACS2; stabilizes the interaction of NEF/MHC-I with host AP1M1; necessary for MHC-I internalization stretch occupies residues 62–65; sequence EEEE. Residues 69–78 are SH3-binding; interaction with Src family tyrosine kinases; it reads PVTPQVPLRP. Residues 72 to 75 carry the PxxP; stabilizes the interaction of NEF/MHC-I with host AP1M1; necessary for MHC-I internalization motif; the sequence is PQVP. Positions 108 to 124 are mediates dimerization, Nef-PTE1 interaction; it reads DILDLWIYHTQGYFPDW. Residues 108–124 form a mediates dimerization, Nef-PTE1 interaction, Nef-induced CD4 and MHC-I down-regulation and enhancement of infectivity region; it reads DILDLWIYHTQGYFPDW. A binding to ATP6V1H region spans residues 148–180; it reads VEPDKVEEANKGENTSLLHPVSLHGMDDPEREV. The short motif at 164–165 is the Dileucine internalization motif; necessary for CD4 internalization element; the sequence is LL. A Diacidic; necessary for CD4 internalization motif is present at residues 174 to 175; sequence DD.

Belongs to the lentivirus primate group Nef protein family. Monomer; cytosolic form. Homodimer; membrane bound form. Interacts with Nef associated p21-activated kinase (PAK2); this interaction activates PAK2. Associates with the Nef-MHC-I-AP1 complex; this complex is required for MHC-I internalization. Interacts (via C-terminus) with host PI3-kinase. Interacts with host PACS1; this interaction seems to be weak. Interacts with host PACS2. Interacts with host LCK and MAPK3; these interactions inhibit the kinase activity of the latter. Interacts with host ATP6V1H; this interaction may play a role in CD4 endocytosis. Associates with the CD4-Nef-AP2 complex; this complex is required for CD4 internalization. Interacts with host AP2 subunit alpha and AP2 subunit sigma2. Interacts with TCR-zeta chain; this interaction up-regulates the Fas ligand (FasL) surface expression. Interacts with host HCK, LYN, and SRC; these interactions activate the Src family kinases. Interacts with MAP3K5; this interaction inhibits the Fas and TNFR-mediated death signals. Interacts with beta-COP and PTE1. Interacts with human RACK1; this increases Nef phosphorylation by PKC. Interacts with TP53; this interaction decreases the half-life of TP53, protecting the infected cell against p53-mediated apoptosis. The virion-associated Nef proteins are cleaved by the viral protease to release the soluble C-terminal core protein. Nef is probably cleaved concomitantly with viral structural proteins on maturation of virus particles. Post-translationally, myristoylated. In terms of processing, phosphorylated on serine residues, probably by host PKCdelta and theta.

It is found in the host cell membrane. It localises to the virion. Its subcellular location is the secreted. The protein resides in the host Golgi apparatus membrane. Factor of infectivity and pathogenicity, required for optimal virus replication. Alters numerous pathways of T-lymphocytes function and down-regulates immunity surface molecules in order to evade host defense and increase viral infectivity. Alters the functionality of other immunity cells, like dendritic cells, monocytes/macrophages and NK cells. Its function is as follows. In infected CD4(+) T-lymphocytes, down-regulates the surface MHC-I, mature MHC-II, CD4, CD28, CCR5 and CXCR4 molecules. Mediates internalization and degradation of host CD4 through the interaction of with the cytoplasmic tail of CD4, the recruitment of AP-2 (clathrin adapter protein complex 2), internalization through clathrin coated pits, and subsequent transport to endosomes and lysosomes for degradation. Diverts host MHC-I molecules to the trans-Golgi network-associated endosomal compartments by an endocytic pathway to finally target them for degradation. MHC-I down-regulation may involve AP-1 (clathrin adapter protein complex 1) or possibly Src family kinase-ZAP70/Syk-PI3K cascade recruited by PACS2. In consequence infected cells are masked for immune recognition by cytotoxic T-lymphocytes. Decreasing the number of immune receptors also prevents reinfection by more HIV particles (superinfection). Down-regulates host SERINC3 and SERINC5 thereby excluding these proteins from the viral particles. Virion infectivity is drastically higher when SERINC3 or SERINC5 are excluded from the viral envelope, because these host antiviral proteins impair the membrane fusion event necessary for subsequent virion penetration. In terms of biological role, bypasses host T-cell signaling by inducing a transcriptional program nearly identical to that of anti-CD3 cell activation. Interaction with TCR-zeta chain up-regulates the Fas ligand (FasL). Increasing surface FasL molecules and decreasing surface MHC-I molecules on infected CD4(+) cells send attacking cytotoxic CD8+ T-lymphocytes into apoptosis. Functionally, plays a role in optimizing the host cell environment for viral replication without causing cell death by apoptosis. Protects the infected cells from apoptosis in order to keep them alive until the next virus generation is ready to strike. Inhibits the Fas and TNFR-mediated death signals by blocking MAP3K5/ASK1. Decreases the half-life of TP53, protecting the infected cell against p53-mediated apoptosis. Inhibits the apoptotic signals regulated by the Bcl-2 family proteins through the formation of a Nef/PI3-kinase/PAK2 complex that leads to activation of PAK2 and induces phosphorylation of host BAD. Extracellular Nef protein targets CD4(+) T-lymphocytes for apoptosis by interacting with CXCR4 surface receptors. The polypeptide is Protein Nef (Homo sapiens (Human)).